The chain runs to 2200 residues: Bromodomain and WD repeat-containing DDB_G0285837 (2200 aa).

Disordered stretches follow at residues 137 to 178 (GFND…SNTN), 194 to 245 (VTPT…TTPP), and 259 to 288 (DIQQ…NNNN). Composition is skewed to low complexity over residues 161 to 176 (NNNN…SNSN), 203 to 242 (NTTN…TTLT), and 259 to 273 (DIQQ…QQQQ). WD repeat units lie at residues 352–391 (GHKA…LIAT), 394–433 (GHLG…YDSI), 442–483 (SVNN…HVIS), 548–586 (GKTN…PKLV), 591–630 (GHPT…KWDH), 653–691 (RSKA…FHLE), 694–736 (EHTS…KKFV), and 741–780 (GFQC…DINN). 2 stretches are compositionally biased toward acidic residues: residues 918–933 (DDEI…EDFN) and 955–968 (QDDD…EDYD). Disordered stretches follow at residues 918–1180 (DDEI…NHLT), 1262–1297 (NNNN…DDDD), 1461–1538 (ENNQ…NNNN), and 1662–1703 (NFNS…NNNN). Residues 974-1000 (MSTRKKSKIKADKRKKRLLKQSKKFTR) show a composition bias toward basic residues. Acidic residues predominate over residues 1052 to 1074 (GEIEMDDDDQYLNDNILDSDDND). Residues 1109–1132 (SSDNSSENDSSANGSDSDYSGSKS) show a composition bias toward low complexity. Over residues 1133 to 1164 (NKNKRGDKSKRNKKGKKNVKNKKVQKRGRKKS) the composition is skewed to basic residues. Composition is skewed to low complexity over residues 1262 to 1292 (NNNN…QQIN) and 1461 to 1525 (ENNQ…NSLN). The 102-residue stretch at 1722–1823 (EKIENLKKEM…HRISDILKEA (102 aa)) folds into the Bromo domain. The segment at 1850–2200 (DKDDSQLDDE…RGRGRPPKSN (351 aa)) is disordered. Positions 1878–1888 (LANNNHGNNKS) are enriched in low complexity. Positions 1910–1920 (TGKNITRSLLS) are enriched in polar residues. Residues 1945–1958 (TTTTTTTTTTTSST) are compositionally biased toward low complexity. Acidic residues-rich tracts occupy residues 2016-2028 (DYND…DNDG), 2057-2073 (EDED…EEDY), and 2104-2113 (SEEEEDEDQS). Residues 2114 to 2124 (DVNSNNNSDNE) are compositionally biased toward low complexity. A compositionally biased stretch (acidic residues) spans 2125–2138 (SGGEDGYSGEDGSE). Residues 2170-2185 (SFKNNNNNNNINNNVN) show a composition bias toward low complexity. The span at 2190 to 2200 (KRGRGRPPKSN) shows a compositional bias: basic residues.

This is Bromodomain and WD repeat-containing DDB_G0285837 from Dictyostelium discoideum (Social amoeba).